Here is a 900-residue protein sequence, read N- to C-terminus: MIGLRSISKNKQTINSISKSFYCTSSPSSSSVKLSVTRLIDGYRAHGHLAANIDPLARMERIRSQLLDLDRYNLVKGQSIPSTIDLINQDLTNLDQVVSFLENAYCNDVTAQFDHIESIEEKAWLYEKFEQLQHQNPSKSEKINILKNLIKSEIFDQFMQKKFPTFKRYGLEGNESMMVSCDSIFRESAKNQLKNVVIGMPHRGRLNLLVQMCNYPAKDFFWKVKGNSEFSEGILGVGDVTSHIAVSTDLQFNNNKESVHVSLIHNPSHLEAVDPVAAGKTRAKQFYEKNEGGSESLCLMLHGDAAVAGQGVVTETLQLSQLSGFNIGGCVHVIVNNQIGFTTVPTNGRSNRYSSDIGKFIGAPIIVVNSQSPEQVEKVSRLAVEYRQKFKKDIIIDLIGWRKFGHNEVDEPSFTQPTMYQNIRKRQSIPQKYATQIISQGIFSEQELLEFTQKEQAILEEQFQLSTPENFKYSPMDHLQGKWSGLIQSKHIADDSKLDTGYSVEELSEIANDSVKVPSDFQVHQRLLRSFSNARLEKLKQNQADWATAESMAVGSLMKQGYNVRISGQDVGRGTFSQRHFNLTEQNSDRIYQPLNNMGAKGELDVVNSNLSEFAVLCYEYGYSLESPDTLPIWEAQFGDFINGAQIAIDQFVTSGESKWLRQSGIVILLPHGFDGAGPEHSSCRIERFLQLSDTEAVNVKDDTLINQETNFYFINPSTPANYFHALRRQMIRNYRKPLIVAGPKVLLRHPNCFSTLNEMAPGTHFQTVLSDPDTINNASTIKRVIFCSGKVFYDLQEERKAKNFNDVAIIRLEQIAPFPYQRIQEEINRYSNATKFAWVQEEQQNGGCWSFVEPRFKQRYPQTSQIKYIGRPPLAASAIGISSIHKKEVSQLLIDAFNF.

Belongs to the alpha-ketoglutarate dehydrogenase family. Thiamine diphosphate serves as cofactor.

The protein resides in the mitochondrion. It carries out the reaction N(6)-[(R)-lipoyl]-L-lysyl-[protein] + 2-oxoadipate + H(+) = N(6)-[(R)-S(8)-glutaryldihydrolipoyl]-L-lysyl-[protein] + CO2. In terms of biological role, 2-oxoadipate dehydrogenase (E1a) component of the 2-oxoadipate dehydrogenase complex (OADHC). Participates in the first step, rate limiting for the overall conversion of 2-oxoadipate (alpha-ketoadipate) to glutaryl-CoA and CO(2) catalyzed by the whole OADHC. Catalyzes the irreversible decarboxylation of 2-oxoadipate via the thiamine diphosphate (ThDP) cofactor and subsequent transfer of the decarboxylated acyl intermediate on an oxidized dihydrolipoyl group that is covalently amidated to the E2 enzyme (dihydrolipoyllysine-residue succinyltransferase or DLST). The polypeptide is Probable 2-oxoadipate dehydrogenase complex component E1 homolog (odhA) (Dictyostelium discoideum (Social amoeba)).